Reading from the N-terminus, the 197-residue chain is 7-methyl-GTP pyrophosphatase (197 aa).

Asp79 functions as the Proton acceptor in the catalytic mechanism.

Belongs to the Maf family. YceF subfamily.

The protein resides in the cytoplasm. The catalysed reaction is N(7)-methyl-GTP + H2O = N(7)-methyl-GMP + diphosphate + H(+). Its function is as follows. Nucleoside triphosphate pyrophosphatase that hydrolyzes 7-methyl-GTP (m(7)GTP). May have a dual role in cell division arrest and in preventing the incorporation of modified nucleotides into cellular nucleic acids. The chain is 7-methyl-GTP pyrophosphatase from Dictyostelium discoideum (Social amoeba).